The chain runs to 782 residues: E3 ubiquitin-protein ligase SopA (782 aa).

The disordered stretch occupies residues 136–171; it reads GVSVSANNRPTVSEGRTPPVSPSLSLQATSSPSSPA. Residues 157 to 171 are compositionally biased toward low complexity; sequence PSLSLQATSSPSSPA. The active-site Glycyl thioester intermediate is the Cys-753.

The protein belongs to the SopA E3 ligase family. Ubiquitinated in the presence of host E1 ubiquitin-activating enzyme, E2 ubiquitin-conjugating enzyme and ubiquitin.

It is found in the secreted. Its subcellular location is the host cell. The enzyme catalyses S-ubiquitinyl-[E2 ubiquitin-conjugating enzyme]-L-cysteine + [acceptor protein]-L-lysine = [E2 ubiquitin-conjugating enzyme]-L-cysteine + N(6)-ubiquitinyl-[acceptor protein]-L-lysine.. In terms of biological role, effector proteins function to alter host cell physiology and promote bacterial survival in host tissues. This protein is an E3 ubiquitin ligase that interferes with host's ubiquitination pathway. For instance, prevents host innate immune response by ubiquitinating and thus sending to degradation host E3 ubiquitin ligases TRIM56 and TRIM65. The chain is E3 ubiquitin-protein ligase SopA (sopA) from Salmonella typhimurium (strain D23580).